The primary structure comprises 697 residues: uncharacterized protein (697 aa).

A run of 5 helical transmembrane segments spans residues 45–65, 86–106, 128–148, 198–218, and 280–300; these read LCAV…LALL, TVAA…MGVV, VVVS…GMLA, VLLG…WWAL, and HLAI…ILAG. ABC transporter domains follow at residues 251 to 473 and 477 to 696; these read VRLD…QPQH and LELV…AGGM. Residues 285-292 and 514-521 each bind ATP; these read GANGSGKT and GGNGSGKS. The chain crosses the membrane as a helical span at residues 522 to 542; it reads TLAWIMAGLTIPTTGACLLDG.

Belongs to the ABC transporter superfamily.

The protein resides in the cell membrane. This is an uncharacterized protein from Mycobacterium tuberculosis (strain CDC 1551 / Oshkosh).